Reading from the N-terminus, the 584-residue chain is Probable lysosomal cobalamin transporter (584 aa).

10 consecutive transmembrane segments (helical) span residues 8 to 28 (LIWIVYAIVVGILSIVASTFV), 46 to 66 (IFTLTALLATVLLLPVDVALV), 93 to 113 (TVVYYFLYSLDAVLCLLIVPF), 144 to 164 (TLVFILLTIILFLVGFFVPVA), 189 to 209 (ALTFALGLLIVMGIIVYVIYS), 313 to 333 (LLGGLLLLAISVMIWISMLLT), 350 to 370 (ILGKINIINPVNWVLVEAASV), 376 to 396 (VIFIVLVLHLFTSSVVGIATI), 421 to 441 (ATVMLTLITLALNYSISMIVV), and 509 to 529 (GIVDFWAQFVFLGFSLIVLLI).

It belongs to the LIMR family. LMBRD1 subfamily.

Its subcellular location is the lysosome membrane. In terms of biological role, probable lysosomal cobalamin transporter. Required to export cobalamin from lysosomes allowing its conversion to cofactors. This chain is Probable lysosomal cobalamin transporter, found in Coccidioides immitis (strain RS) (Valley fever fungus).